Reading from the N-terminus, the 164-residue chain is Interferon gamma (164 aa).

An N-terminal signal peptide occupies residues 1–19; it reads MTCQTYNLFVLSVIMIYYG. Asn-42 and Asn-61 each carry an N-linked (GlcNAc...) asparagine glycan.

Belongs to the type II (or gamma) interferon family. In terms of assembly, homodimer.

It localises to the secreted. Its function is as follows. Produced by lymphocytes activated by specific antigens or mitogens. IFN-gamma, in addition to having antiviral activity, has important immunoregulatory functions. It is a potent activator of macrophages, it has antiproliferative effects on transformed cells and it can potentiate the antiviral and antitumor effects of the type I interferons. In Gallus gallus (Chicken), this protein is Interferon gamma (IFNG).